The primary structure comprises 426 residues: Serine--tRNA ligase (426 aa).

233–235 (TSE) contributes to the L-serine binding site. 264–266 (RSE) is a binding site for ATP. E287 lines the L-serine pocket. Residue 351 to 354 (EISS) participates in ATP binding. S387 lines the L-serine pocket.

Belongs to the class-II aminoacyl-tRNA synthetase family. Type-1 seryl-tRNA synthetase subfamily. Homodimer. The tRNA molecule binds across the dimer.

The protein resides in the cytoplasm. It carries out the reaction tRNA(Ser) + L-serine + ATP = L-seryl-tRNA(Ser) + AMP + diphosphate + H(+). The catalysed reaction is tRNA(Sec) + L-serine + ATP = L-seryl-tRNA(Sec) + AMP + diphosphate + H(+). It functions in the pathway aminoacyl-tRNA biosynthesis; selenocysteinyl-tRNA(Sec) biosynthesis; L-seryl-tRNA(Sec) from L-serine and tRNA(Sec): step 1/1. Functionally, catalyzes the attachment of serine to tRNA(Ser). Is also able to aminoacylate tRNA(Sec) with serine, to form the misacylated tRNA L-seryl-tRNA(Sec), which will be further converted into selenocysteinyl-tRNA(Sec). The protein is Serine--tRNA ligase of Colwellia psychrerythraea (strain 34H / ATCC BAA-681) (Vibrio psychroerythus).